A 269-amino-acid chain; its full sequence is Zinc transporter ZupT (269 aa).

Helical transmembrane passes span 11-31 (IALA…LLVL), 40-60 (LLAF…LSEI), 80-100 (YGTL…HFIP), 125-145 (ALLT…ATFF), 158-178 (AFAI…PVYF), 187-207 (FSAS…GYWL), 217-237 (FGWV…DELL), and 249-269 (TVYG…LFKW). The Fe(2+) site is built by Asn-136 and Glu-139. Zn(2+) is bound by residues Glu-139 and His-164. Residues Asn-165, Glu-168, and Glu-197 each contribute to the Fe(2+) site. Position 168 (Glu-168) interacts with Zn(2+).

Belongs to the ZIP transporter (TC 2.A.5) family. ZupT subfamily.

It is found in the cell inner membrane. It carries out the reaction Zn(2+)(in) = Zn(2+)(out). Functionally, mediates zinc uptake. May also transport other divalent cations. This Stenotrophomonas maltophilia (strain K279a) protein is Zinc transporter ZupT.